Reading from the N-terminus, the 541-residue chain is 2-hydroxyacylsphingosine 1-beta-galactosyltransferase (541 aa).

An N-terminal signal peptide occupies residues 1 to 20 (MKSYTPYFILLWSAVGIAKA). 3 N-linked (GlcNAc...) asparagine glycosylation sites follow: N78, N333, and N442. The helical transmembrane segment at 472-492 (YFLLDIAFVLLLGAALLYFLL) threads the bilayer.

This sequence belongs to the UDP-glycosyltransferase family.

The protein resides in the membrane. The protein localises to the endoplasmic reticulum. It carries out the reaction an N-acylsphing-4-enine + UDP-alpha-D-galactose = a beta-D-galactosyl-(1&lt;-&gt;1')-N-acylsphing-4-enine + UDP + H(+). The catalysed reaction is an N-acyl-sphingoid base + UDP-alpha-D-galactose = a D-galactosylceramide + UDP + H(+). It catalyses the reaction N-(2-hydroxy-hexanoyl)-sphing-4-enine + UDP-alpha-D-galactose = N-(2-hydroxy-hexanoyl)-beta-D-galactosyl-sphing-4-enine + UDP + H(+). The enzyme catalyses N-(2-hydroxy-hexanoyl)-sphinganine + UDP-alpha-D-galactose = N-(2-hydroxyhexanoyl)-beta-D-galactosylsphinganine + UDP + H(+). It functions in the pathway sphingolipid metabolism; galactosylceramide biosynthesis. Its function is as follows. Catalyzes the transfer of galactose to ceramide, a key enzymatic step in the biosynthesis of galactocerebrosides, which are abundant sphingolipids of the myelin membrane of the central nervous system and peripheral nervous system. Galactosylates both hydroxy- and non-hydroxy fatty acid-containing ceramides and diglycerides. In Homo sapiens (Human), this protein is 2-hydroxyacylsphingosine 1-beta-galactosyltransferase.